The following is a 265-amino-acid chain: NADH dehydrogenase [ubiquinone] iron-sulfur protein 3, mitochondrial (265 aa).

The transit peptide at 1 to 33 directs the protein to the mitochondrion; sequence MAALIRNLGARAAVAALSAKHVVPAAGSTALRM.

This sequence belongs to the complex I 30 kDa subunit family. Part of the mitochondrial membrane respiratory chain NADH dehydrogenase (Complex I). Interacts with sicily; interaction is stronger with unprocessed sicily protein.

It is found in the mitochondrion. The catalysed reaction is a ubiquinone + NADH + 5 H(+)(in) = a ubiquinol + NAD(+) + 4 H(+)(out). Core subunit of the mitochondrial membrane respiratory chain NADH dehydrogenase (Complex I) that is believed to belong to the minimal assembly required for catalysis. Complex I functions in the transfer of electrons from NADH to the respiratory chain. The immediate electron acceptor for the enzyme is believed to be ubiquinone. This is NADH dehydrogenase [ubiquinone] iron-sulfur protein 3, mitochondrial from Drosophila melanogaster (Fruit fly).